A 236-amino-acid polypeptide reads, in one-letter code: Pyridoxine 5'-phosphate synthase (236 aa).

A 3-amino-2-oxopropyl phosphate-binding site is contributed by asparagine 6. Residue aspartate 8–histidine 9 participates in 1-deoxy-D-xylulose 5-phosphate binding. 3-amino-2-oxopropyl phosphate is bound at residue arginine 17. The active-site Proton acceptor is the histidine 42. Residues arginine 44 and histidine 49 each contribute to the 1-deoxy-D-xylulose 5-phosphate site. The Proton acceptor role is filled by glutamate 69. Threonine 99 lines the 1-deoxy-D-xylulose 5-phosphate pocket. Residue histidine 190 is the Proton donor of the active site. Residues glycine 191 and glycine 212–histidine 213 each bind 3-amino-2-oxopropyl phosphate.

It belongs to the PNP synthase family. Homooctamer; tetramer of dimers.

It is found in the cytoplasm. The catalysed reaction is 3-amino-2-oxopropyl phosphate + 1-deoxy-D-xylulose 5-phosphate = pyridoxine 5'-phosphate + phosphate + 2 H2O + H(+). It functions in the pathway cofactor biosynthesis; pyridoxine 5'-phosphate biosynthesis; pyridoxine 5'-phosphate from D-erythrose 4-phosphate: step 5/5. In terms of biological role, catalyzes the complicated ring closure reaction between the two acyclic compounds 1-deoxy-D-xylulose-5-phosphate (DXP) and 3-amino-2-oxopropyl phosphate (1-amino-acetone-3-phosphate or AAP) to form pyridoxine 5'-phosphate (PNP) and inorganic phosphate. This is Pyridoxine 5'-phosphate synthase from Prosthecochloris aestuarii (strain DSM 271 / SK 413).